Here is a 158-residue protein sequence, read N- to C-terminus: NAD(P)H-quinone oxidoreductase subunit N, organellar chromatophore (158 aa).

This sequence belongs to the complex I NdhN subunit family. In terms of assembly, NDH-1 can be composed of about 15 different subunits; different subcomplexes with different compositions have been identified which probably have different functions.

Its subcellular location is the plastid. It is found in the organellar chromatophore thylakoid membrane. The catalysed reaction is a plastoquinone + NADH + (n+1) H(+)(in) = a plastoquinol + NAD(+) + n H(+)(out). The enzyme catalyses a plastoquinone + NADPH + (n+1) H(+)(in) = a plastoquinol + NADP(+) + n H(+)(out). NDH-1 shuttles electrons from an unknown electron donor, via FMN and iron-sulfur (Fe-S) centers, to quinones in the respiratory and/or the photosynthetic chain. The immediate electron acceptor for the enzyme in this species is believed to be plastoquinone. Couples the redox reaction to proton translocation, and thus conserves the redox energy in a proton gradient. The chain is NAD(P)H-quinone oxidoreductase subunit N, organellar chromatophore from Paulinella chromatophora.